We begin with the raw amino-acid sequence, 185 residues long: Ribosome-recycling factor (185 aa).

Belongs to the RRF family.

The protein resides in the cytoplasm. Functionally, responsible for the release of ribosomes from messenger RNA at the termination of protein biosynthesis. May increase the efficiency of translation by recycling ribosomes from one round of translation to another. The polypeptide is Ribosome-recycling factor (Enterobacter sp. (strain 638)).